The sequence spans 178 residues: Large ribosomal subunit protein uL6 (178 aa).

The protein belongs to the universal ribosomal protein uL6 family. In terms of assembly, part of the 50S ribosomal subunit.

Functionally, this protein binds to the 23S rRNA, and is important in its secondary structure. It is located near the subunit interface in the base of the L7/L12 stalk, and near the tRNA binding site of the peptidyltransferase center. The chain is Large ribosomal subunit protein uL6 from Lactococcus lactis subsp. cremoris (strain MG1363).